The chain runs to 643 residues: Long-chain fatty acid transport protein 4 (643 aa).

Helical transmembrane passes span 20 to 42 (LPWT…WRFI) and 139 to 156 (FVGL…AALI). 243–254 (YIYTSGTTGLPK) is a binding site for AMP.

The protein belongs to the ATP-dependent AMP-binding enzyme family.

It localises to the endoplasmic reticulum membrane. It carries out the reaction a fatty acid(in) = a fatty acid(out). It catalyses the reaction (9Z,12Z)-octadecadienoate(out) = (9Z,12Z)-octadecadienoate(in). The enzyme catalyses (9Z)-octadecenoate(out) = (9Z)-octadecenoate(in). The catalysed reaction is hexadecanoate(out) = hexadecanoate(in). It carries out the reaction a long-chain fatty acid + ATP + CoA = a long-chain fatty acyl-CoA + AMP + diphosphate. It catalyses the reaction (5Z,8Z,11Z,14Z)-eicosatetraenoate + ATP + CoA = (5Z,8Z,11Z,14Z)-eicosatetraenoyl-CoA + AMP + diphosphate. The enzyme catalyses (9Z)-octadecenoate + ATP + CoA = (9Z)-octadecenoyl-CoA + AMP + diphosphate. The catalysed reaction is hexadecanoate + ATP + CoA = hexadecanoyl-CoA + AMP + diphosphate. It carries out the reaction (E)-hexadec-2-enoate + ATP + CoA = (2E)-hexadecenoyl-CoA + AMP + diphosphate. It catalyses the reaction a very long-chain fatty acid + ATP + CoA = a very long-chain fatty acyl-CoA + AMP + diphosphate. The enzyme catalyses tetracosanoate + ATP + CoA = tetracosanoyl-CoA + AMP + diphosphate. Mediates the import of long-chain fatty acids (LCFA) into the cell by facilitating their transport across cell membranes. Appears to be the principal fatty acid transporter in small intestinal enterocytes. Also functions as an acyl-CoA ligase catalyzing the ATP-dependent formation of fatty acyl-CoA using LCFA and very-long-chain fatty acids (VLCFA) as substrates, which prevents fatty acid efflux from cells and might drive more fatty acid uptake. Plays a role in the formation of the epidermal barrier. Required for fat absorption in early embryogenesis. Probably involved in fatty acid transport across the blood barrier. Indirectly inhibits RPE65 via substrate competition and via production of VLCFA derivatives like lignoceroyl-CoA. Prevents light-induced degeneration of rods and cones. The chain is Long-chain fatty acid transport protein 4 (SLC27A4) from Pongo abelii (Sumatran orangutan).